The primary structure comprises 521 residues: Bifunctional purine biosynthesis protein PurH (521 aa).

The region spanning 1 to 145 (MIKQALISVS…KNHRDVTVVV (145 aa)) is the MGS-like domain.

This sequence belongs to the PurH family.

The catalysed reaction is (6R)-10-formyltetrahydrofolate + 5-amino-1-(5-phospho-beta-D-ribosyl)imidazole-4-carboxamide = 5-formamido-1-(5-phospho-D-ribosyl)imidazole-4-carboxamide + (6S)-5,6,7,8-tetrahydrofolate. The enzyme catalyses IMP + H2O = 5-formamido-1-(5-phospho-D-ribosyl)imidazole-4-carboxamide. It participates in purine metabolism; IMP biosynthesis via de novo pathway; 5-formamido-1-(5-phospho-D-ribosyl)imidazole-4-carboxamide from 5-amino-1-(5-phospho-D-ribosyl)imidazole-4-carboxamide (10-formyl THF route): step 1/1. Its pathway is purine metabolism; IMP biosynthesis via de novo pathway; IMP from 5-formamido-1-(5-phospho-D-ribosyl)imidazole-4-carboxamide: step 1/1. This is Bifunctional purine biosynthesis protein PurH from Burkholderia orbicola (strain MC0-3).